Here is a 248-residue protein sequence, read N- to C-terminus: 5'-nucleotidase SurE (248 aa).

The a divalent metal cation site is built by Asp-8, Asp-9, Ser-39, and Asn-91.

Belongs to the SurE nucleotidase family. It depends on a divalent metal cation as a cofactor.

The protein resides in the cytoplasm. It carries out the reaction a ribonucleoside 5'-phosphate + H2O = a ribonucleoside + phosphate. In terms of biological role, nucleotidase that shows phosphatase activity on nucleoside 5'-monophosphates. This is 5'-nucleotidase SurE from Neisseria meningitidis serogroup B (strain ATCC BAA-335 / MC58).